Consider the following 162-residue polypeptide: Small ribosomal subunit protein uS13 (162 aa).

The disordered stretch occupies residues 142–162; the sequence is RGQRTKSTGRRGSTVGVSRKK.

Belongs to the universal ribosomal protein uS13 family. As to quaternary structure, part of the 30S ribosomal subunit. Forms a loose heterodimer with protein S19. Forms two bridges to the 50S subunit in the 70S ribosome.

In terms of biological role, located at the top of the head of the 30S subunit, it contacts several helices of the 16S rRNA. In the 70S ribosome it contacts the 23S rRNA (bridge B1a) and protein L5 of the 50S subunit (bridge B1b), connecting the 2 subunits; these bridges are implicated in subunit movement. The polypeptide is Small ribosomal subunit protein uS13 (Methanosarcina mazei (strain ATCC BAA-159 / DSM 3647 / Goe1 / Go1 / JCM 11833 / OCM 88) (Methanosarcina frisia)).